Reading from the N-terminus, the 309-residue chain is Tyrosine recombinase XerD (309 aa).

The 86-residue stretch at 3 to 88 (MRASLAIENF…ALRQFFRFLY (86 aa)) folds into the Core-binding (CB) domain. Residues 109 to 302 (PLPKIMSVEN…LEERLHKLVS (194 aa)) enclose the Tyr recombinase domain. Catalysis depends on residues Arg158, Lys182, His254, Arg257, and His280. Residue Tyr289 is the O-(3'-phospho-DNA)-tyrosine intermediate of the active site.

The protein belongs to the 'phage' integrase family. XerD subfamily. As to quaternary structure, forms a cyclic heterotetrameric complex composed of two molecules of XerC and two molecules of XerD.

It is found in the cytoplasm. Site-specific tyrosine recombinase, which acts by catalyzing the cutting and rejoining of the recombining DNA molecules. The XerC-XerD complex is essential to convert dimers of the bacterial chromosome into monomers to permit their segregation at cell division. It also contributes to the segregational stability of plasmids. The polypeptide is Tyrosine recombinase XerD (Brucella suis biovar 1 (strain 1330)).